The primary structure comprises 470 residues: Tigger transposable element-derived protein 3 (470 aa).

The 53-residue stretch at 3-55 (LNTKKKLHALSLAEKIQVLELLDESKMSQSEVARRFQVSQPQISRICKNKEKL) folds into the HTH psq-type domain. 2 DNA-binding regions (H-T-H motif) span residues 31–51 (QSEV…ICKN) and 100–130 (PMLL…WKRR). Residues 67–137 (ERKRKRESKY…KRRNNVGFGT (71 aa)) enclose the HTH CENPB-type domain. The DDE-1 domain occupies 167–360 (FSPEDVFGCA…VPRQLILSSF (194 aa)). Residues 402–421 (DPGPRVCKEETGTEDSGREE) show a composition bias toward basic and acidic residues. Residues 402–426 (DPGPRVCKEETGTEDSGREEDGFEP) are disordered.

The protein belongs to the tigger transposable element derived protein family.

It localises to the nucleus. The protein is Tigger transposable element-derived protein 3 (Tigd3) of Mus musculus (Mouse).